Consider the following 309-residue polypeptide: Bifunctional methylenetetrahydrofolate dehydrogenase/cyclohydrolase, mitochondrial (309 aa).

This sequence belongs to the tetrahydrofolate dehydrogenase/cyclohydrolase family. Homodimer. The cofactor is Mg(2+).

The protein localises to the mitochondrion. The catalysed reaction is (6R)-5,10-methylene-5,6,7,8-tetrahydrofolate + NAD(+) = (6R)-5,10-methenyltetrahydrofolate + NADH. It catalyses the reaction (6R)-5,10-methenyltetrahydrofolate + H2O = (6R)-10-formyltetrahydrofolate + H(+). Functionally, may play a role in spermatogenesis. The polypeptide is Bifunctional methylenetetrahydrofolate dehydrogenase/cyclohydrolase, mitochondrial (Nmdmc) (Drosophila melanogaster (Fruit fly)).